A 378-amino-acid polypeptide reads, in one-letter code: Succinyl-diaminopimelate desuccinylase (378 aa).

Histidine 66 is a Zn(2+) binding site. Aspartate 68 is a catalytic residue. Aspartate 100 contacts Zn(2+). Catalysis depends on glutamate 134, which acts as the Proton acceptor. Zn(2+)-binding residues include glutamate 135, glutamate 163, and histidine 350.

It belongs to the peptidase M20A family. DapE subfamily. In terms of assembly, homodimer. Requires Zn(2+) as cofactor. It depends on Co(2+) as a cofactor.

It catalyses the reaction N-succinyl-(2S,6S)-2,6-diaminopimelate + H2O = (2S,6S)-2,6-diaminopimelate + succinate. The protein operates within amino-acid biosynthesis; L-lysine biosynthesis via DAP pathway; LL-2,6-diaminopimelate from (S)-tetrahydrodipicolinate (succinylase route): step 3/3. Functionally, catalyzes the hydrolysis of N-succinyl-L,L-diaminopimelic acid (SDAP), forming succinate and LL-2,6-diaminopimelate (DAP), an intermediate involved in the bacterial biosynthesis of lysine and meso-diaminopimelic acid, an essential component of bacterial cell walls. The polypeptide is Succinyl-diaminopimelate desuccinylase (Hydrogenovibrio crunogenus (strain DSM 25203 / XCL-2) (Thiomicrospira crunogena)).